The sequence spans 81 residues: Apolipoprotein C-I, acidic form (81 aa).

The signal sequence occupies residues 1 to 24 (MRLFLSLLVVVLSIVLEGPTPAQG).

Belongs to the apolipoprotein C1 family.

The protein resides in the secreted. In Cercocebus atys (Sooty mangabey), this protein is Apolipoprotein C-I, acidic form (APOC1A).